Reading from the N-terminus, the 146-residue chain is MLKTLRFGTRAFGQNLNIAKRNFCTRYTNDHEWVTSLGSQNYRLGITDFAQKQLGDIVFVEIPQIGATLSQGQPITVVESVKAASDIYIPMDGSITTVNQELESSPELVNEEPMGDGWIVEYKSSKTDQFQSLMNKAQYDEYIKEH.

The transit peptide at 1-30 (MLKTLRFGTRAFGQNLNIAKRNFCTRYTND) directs the protein to the mitochondrion. The region spanning 41–123 (NYRLGITDFA…MGDGWIVEYK (83 aa)) is the Lipoyl-binding domain. Lys-82 bears the N6-lipoyllysine mark.

This sequence belongs to the GcvH family. As to quaternary structure, the glycine cleavage system is composed of four proteins: P, T, L and H. It depends on (R)-lipoate as a cofactor.

Its subcellular location is the mitochondrion. The glycine cleavage system catalyzes the degradation of glycine. The H protein shuttles the methylamine group of glycine from the P protein to the T protein. This Dictyostelium discoideum (Social amoeba) protein is Probable glycine cleavage system H protein 1, mitochondrial (gcvH1).